Here is a 1257-residue protein sequence, read N- to C-terminus: Liprin-alpha-2 (1257 aa).

The interval methionine 1–serine 29 is disordered. Low complexity predominate over residues serine 16–aspartate 26. Coiled coils occupy residues serine 29–methionine 154 and lysine 185–glycine 235. Phosphoserine is present on serine 236. A Phosphothreonine modification is found at threonine 237. Serine 239 is subject to Phosphoserine. Coiled-coil stretches lie at residues threonine 264–glutamate 541 and histidine 643–leucine 695. The disordered stretch occupies residues glycine 439–lysine 463. Residues serine 687 and serine 689 each carry the phosphoserine modification. A compositionally biased stretch (low complexity) spans threonine 709–proline 725. 2 disordered regions span residues threonine 709–arginine 738 and glutamate 759–isoleucine 834. Residues threonine 787 to alanine 802 show a composition bias toward polar residues. Phosphoserine is present on residues serine 817 and serine 820. SAM domains are found at residues tryptophan 898–leucine 964, asparagine 1020–leucine 1084, and tryptophan 1108–leucine 1177. Positions leucine 1081–valine 1107 form a coiled coil.

Belongs to the liprin family. Liprin-alpha subfamily. Forms homodimers and heterodimers with liprins-alpha and liprins-beta. Interacts with the second PTPase domain of PTPRD, PTPRF and PTPRS. Interacts with KIF1A; the interaction decreases in presence of calcium.

It localises to the cytoplasm. Its subcellular location is the cell surface. The protein resides in the cell projection. It is found in the dendritic spine. Its function is as follows. Alters PTPRF cellular localization and induces PTPRF clustering. May regulate the disassembly of focal adhesions. May localize receptor-like tyrosine phosphatases type 2A at specific sites on the plasma membrane, possibly regulating their interaction with the extracellular environment and their association with substrates. In neuronal cells, is a scaffolding protein in the dendritic spines which acts as immobile postsynaptic post able to recruit KIF1A-driven dense core vesicles to dendritic spines. This is Liprin-alpha-2 (Ppfia2) from Mus musculus (Mouse).